A 522-amino-acid polypeptide reads, in one-letter code: MPRGFLVKRSKKSTPVSYRIRGGEDGDRALLLLPGCGGARASPPAPGPGPVPGPLQPPPPTERAHAALAAALACAPGPPPPPPGLRAAHFGNPEAAHPAPLYSPTRPVSREHEKHKYFERSFNLGSPVSAESFPTPAALLVGGGGGGGGGGANGAGGGGTCSGDPLLFAPAELKMGTAFSAAAEAARGPGPGPPLPPAAALRPPGKRPSPPASAAAAAEPPAKVAKAPGSKKPKAIRKLHFEDEVTTSPVLGLKIKEGPVEAPRGRAGGAARPLGEFICQLCKEEYADPFALAQHKCSRIVRVEYRCPECAKVFSCPANLASHRRWHKPRPAPAAARACEPETPARAEAREATGGGGSDRDTPSPGGVSESGSEDGLYECHHCAKKFRRQAYLRKHLLAHHQALQAKGAPPPAPPAEDLLALYPGPDEKVPQEAAGDGEAAGVLGLSASAECHLCPVCGETFPSKGAQERHLRLLHAAQVFPCKYCPATFYSSPGLTRHINKCHPSENRQVILLQVPVRPAC.

Positions 1-12 (MPRGFLVKRSKK) are enriched in basic residues. The segment at 1–20 (MPRGFLVKRSKKSTPVSYRI) is SNAG domain. Disordered stretches follow at residues 1–112 (MPRG…SREH) and 182–235 (AAEA…KPKA). The required and sufficient for interaction with KDM1A stretch occupies residues 2–7 (PRGFLV). The tract at residues 43–57 (PPAPGPGPVPGPLQP) is necessary for interaction with CCND1. Residues 43–61 (PPAPGPGPVPGPLQPPPPT) show a composition bias toward pro residues. Composition is skewed to low complexity over residues 66 to 75 (AALAAALACA) and 212 to 228 (ASAA…AKAP). The C2H2-type 1; atypical zinc finger occupies 277–297 (FICQLCKEEYADPFALAQHKC). The segment at 305 to 327 (YRCPECAKVFSCPANLASHRRWH) adopts a C2H2-type 2 zinc-finger fold. Positions 325-373 (RWHKPRPAPAAARACEPETPARAEAREATGGGGSDRDTPSPGGVSESGS) are disordered. Residues 339–351 (CEPETPARAEARE) show a composition bias toward basic and acidic residues. 3 consecutive C2H2-type zinc fingers follow at residues 378-400 (YECH…LLAH), 453-476 (HLCP…RLLH), and 481-504 (FPCK…NKCH).

This sequence belongs to the INSM1 family. Interacts (via the N-terminal region) with CCND1 (via cyclin N-terminal domain); the interaction competes with the binding of CCND1 to CDK4 during cell cycle progression and increases its transcriptional repressor activity. Interacts with HDAC3; the interaction increases its transcriptional repressor activity. Interacts (via the SNAG domain) with HDAC1. Interacts (via the SNAG domain) with HDAC2. Interacts (via the SNAG domain) with KDM1A. Interacts (via the SNAG domain) with RCOR1. Interacts with SORBS1.

It is found in the nucleus. Its function is as follows. Sequence-specific DNA-binding transcriptional regulator that plays a key role in neurogenesis and neuroendocrine cell differentiation during embryonic and/or fetal development. Binds to the consensus sequence 5'-[TG][TC][TC][TT][GA]GGG[CG]A-3' in target promoters. Acts as a transcriptional repressor of NEUROD1 and INS expression via its interaction with cyclin CCND1 in a cell cycle-independent manner. Negatively regulates skeletal muscle-specific gene expression in endocrine cells of the pituitary by inhibiting the Notch signaling pathway. Represses target gene transcription by recruiting chromatin-modifying factors, such as HDAC1, HDAC2, HDAC3, KDM1A and RCOR1 histone deacetylases. Binds to its own promoter, suggesting autoregulation as a self-control feedback mechanism. Competes with histone H3 for the same binding site on the histone demethylase complex formed by KDM1A and RCOR1, and thereby inhibits demethylation of histone H3 at 'Lys-4'. Promotes the generation and expansion of neuronal basal progenitor cells in the developing neocortex. Involved in the differentiation of endocrine cells of the developing anterior pituitary gland, of the pancreas and intestine, and of sympatho-adrenal cells in the peripheral nervous system. Promotes cell cycle signaling arrest and inhibition of cellular proliferation. In Bos taurus (Bovine), this protein is Insulinoma-associated protein 1 (INSM1).